Here is a 230-residue protein sequence, read N- to C-terminus: MKQLEELLSTSFDIQFNDLTLLETAFTHTSYANEHRLLNVSHNERLEFLGDAVLQLIISEYLFAKYPKKTEGDMSKLRSMIVREESLAGFSRFCSFDAYIKLGKGEEKSGGRRRDTILGDLFEAFLGALLLDKGIDAVRRFLKQVMIPQVEKGNFERVRDYKTCLQEFLQTKGDVAIDYQVISEKGPAHAKQFEVSIVVNGAVLSKGLGKSKKLAEQDAAKNALAQLSEV.

Positions 1-134 constitute an RNase III domain; it reads MKQLEELLST…FLGALLLDKG (134 aa). Glu47 contributes to the Mg(2+) binding site. Asp51 is a catalytic residue. Mg(2+)-binding residues include Asp120 and Glu123. Glu123 is a catalytic residue. One can recognise a DRBM domain in the interval 160–229; that stretch reads DYKTCLQEFL…AKNALAQLSE (70 aa).

This sequence belongs to the ribonuclease III family. Homodimer. It depends on Mg(2+) as a cofactor.

It localises to the cytoplasm. It catalyses the reaction Endonucleolytic cleavage to 5'-phosphomonoester.. Its function is as follows. Digests double-stranded RNA. Involved in the processing of primary rRNA transcript to yield the immediate precursors to the large and small rRNAs (23S and 16S). Processes some mRNAs, and tRNAs when they are encoded in the rRNA operon. Processes pre-crRNA and tracrRNA of type II CRISPR loci if present in the organism. The chain is Ribonuclease 3 from Streptococcus pyogenes serotype M28 (strain MGAS6180).